The following is a 306-amino-acid chain: Armadillo repeat-containing protein 10 (306 aa).

Residues 7-29 (VGWVAAGLVLGAGACYCIYRLTR) traverse the membrane as a helical segment. Ser43 is subject to Phosphoserine. A Phosphothreonine modification is found at Thr48. One copy of the ARM repeat lies at 101–143 (GGIPIVGSKINSLNQSIKEKALNALNNLSVNVENQTKIKIYVR).

Interacts with the DNA-binding domain of p53/TP53.

It is found in the endoplasmic reticulum membrane. The protein localises to the mitochondrion outer membrane. In terms of biological role, may play a role in cell survival and cell growth. May suppress the transcriptional activity of p53/TP53. The sequence is that of Armadillo repeat-containing protein 10 (Armc10) from Rattus norvegicus (Rat).